The following is a 391-amino-acid chain: Phosphoglycerate kinase (391 aa).

Residues 21–23, Arg36, 59–62, Arg113, and Arg146 each bind substrate; these read DLN and HLGR. Residues Lys197, Glu319, and 345–348 contribute to the ATP site; that span reads GGDT.

Belongs to the phosphoglycerate kinase family. Monomer.

Its subcellular location is the cytoplasm. The enzyme catalyses (2R)-3-phosphoglycerate + ATP = (2R)-3-phospho-glyceroyl phosphate + ADP. It functions in the pathway carbohydrate degradation; glycolysis; pyruvate from D-glyceraldehyde 3-phosphate: step 2/5. This chain is Phosphoglycerate kinase, found in Xylella fastidiosa (strain Temecula1 / ATCC 700964).